The chain runs to 143 residues: Large ribosomal subunit protein uL16c (143 aa).

This sequence belongs to the universal ribosomal protein uL16 family. Part of the 50S ribosomal subunit.

It localises to the plastid. The protein resides in the chloroplast. This Cyanidioschyzon merolae (strain NIES-3377 / 10D) (Unicellular red alga) protein is Large ribosomal subunit protein uL16c.